Here is a 101-residue protein sequence, read N- to C-terminus: uncharacterized protein (101 aa).

This is an uncharacterized protein from Bacillus subtilis (strain 168).